The following is a 250-amino-acid chain: Probable transcriptional regulatory protein DP2908 (250 aa).

The protein belongs to the TACO1 family.

Its subcellular location is the cytoplasm. The sequence is that of Probable transcriptional regulatory protein DP2908 from Desulfotalea psychrophila (strain LSv54 / DSM 12343).